The primary structure comprises 111 residues: MKYLAAYLLLVQGGNTSPSASDITALLESVGVEAEESRLQALLKDLEGKDLQELIAEGNTKLASVPSGGAAAGGASASTGAAAGGAAEAEEEKEEEAKEESDDDMGFGLFD.

Residues 62–111 (LASVPSGGAAAGGASASTGAAAGGAAEAEEEKEEEAKEESDDDMGFGLFD) form a disordered region. Low complexity predominate over residues 67 to 87 (SGGAAAGGASASTGAAAGGAA). Residues 88-105 (EAEEEKEEEAKEESDDDM) show a composition bias toward acidic residues. Ser101 bears the Phosphoserine mark.

This sequence belongs to the eukaryotic ribosomal protein P1/P2 family.

In terms of biological role, plays an important role in the elongation step of protein synthesis. The chain is Large ribosomal subunit protein P2B (RPP2B) from Candida albicans (Yeast).